The following is a 349-amino-acid chain: Protein-glutamate methylesterase/protein-glutamine glutaminase (349 aa).

The 118-residue stretch at 5-122 (RVLSVDDSAL…REGMLAYSEM (118 aa)) folds into the Response regulatory domain. The residue at position 56 (aspartate 56) is a 4-aspartylphosphate. Residues 152 to 344 (LLSSEKLIAI…QQMLAKISAG (193 aa)) enclose the CheB-type methylesterase domain. Catalysis depends on residues serine 164, histidine 190, and aspartate 286.

Belongs to the CheB family. Post-translationally, phosphorylated by CheA. Phosphorylation of the N-terminal regulatory domain activates the methylesterase activity.

It localises to the cytoplasm. It catalyses the reaction [protein]-L-glutamate 5-O-methyl ester + H2O = L-glutamyl-[protein] + methanol + H(+). The catalysed reaction is L-glutaminyl-[protein] + H2O = L-glutamyl-[protein] + NH4(+). Functionally, involved in chemotaxis. Part of a chemotaxis signal transduction system that modulates chemotaxis in response to various stimuli. Catalyzes the demethylation of specific methylglutamate residues introduced into the chemoreceptors (methyl-accepting chemotaxis proteins or MCP) by CheR. Also mediates the irreversible deamidation of specific glutamine residues to glutamic acid. The polypeptide is Protein-glutamate methylesterase/protein-glutamine glutaminase (Salmonella typhi).